A 233-amino-acid polypeptide reads, in one-letter code: Large ribosomal subunit protein uL1 (233 aa).

This sequence belongs to the universal ribosomal protein uL1 family. As to quaternary structure, part of the 50S ribosomal subunit.

Its function is as follows. Binds directly to 23S rRNA. The L1 stalk is quite mobile in the ribosome, and is involved in E site tRNA release. In terms of biological role, protein L1 is also a translational repressor protein, it controls the translation of the L11 operon by binding to its mRNA. This chain is Large ribosomal subunit protein uL1, found in Campylobacter concisus (strain 13826).